A 122-amino-acid polypeptide reads, in one-letter code: MIIKRSRKELRKIRHLRIRKKIIGTSERPRLAVYKSLRYIYAQIIDDTKGHTLVSASSLEKEIRSQLKSTKNIEAAKLVGEVIAKRALEKGIKKVVFDRGGFLYHGKVKALADSARAAGLEF.

This sequence belongs to the universal ribosomal protein uL18 family. Part of the 50S ribosomal subunit; part of the 5S rRNA/L5/L18/L25 subcomplex. Contacts the 5S and 23S rRNAs.

This is one of the proteins that bind and probably mediate the attachment of the 5S RNA into the large ribosomal subunit, where it forms part of the central protuberance. The polypeptide is Large ribosomal subunit protein uL18 (Dictyoglomus thermophilum (strain ATCC 35947 / DSM 3960 / H-6-12)).